The following is a 691-amino-acid chain: Inactive TPR repeat-containing thioredoxin TTL3 (691 aa).

Disordered regions lie at residues 1-153 (MSHS…AVSP) and 174-209 (MASR…TSGK). Serine 8 bears the Phosphoserine mark. Over residues 19–39 (RFRDLQRNDDDVNKPDFRELD) the composition is skewed to basic and acidic residues. Residues serine 42 and serine 45 each carry the phosphoserine modification. Residues 51-79 (GSASSSAAATPTSSSGSSGSASGKPSVSS) are compositionally biased toward low complexity. Basic and acidic residues predominate over residues 83–93 (KRLDDAYKSHS). 3 stretches are compositionally biased toward polar residues: residues 94–108 (GELS…TTTR), 118–140 (SSTG…HTSP), and 175–189 (ASRT…CTGT). TPR repeat units lie at residues 220–253 (PEEL…SPGN), 255–287 (AYRS…DPSY), 289–321 (RAHQ…PDQA), 327–362 (QTLE…GADS), 412–445 (AYVL…DQTN), 458–491 (VVRA…DDSN), 492–525 (SVLY…QPSY), and 527–559 (KALL…LPGD). Residues 596–683 (DKFKKSVALP…MVCPSHQFLE (88 aa)) enclose the Thioredoxin domain.

Interacts with BRL2. In terms of tissue distribution, expressed in embryos and organ primordia in shoot and root. In primary and cauline leaves and petals, is expressed in hydathodes, guard cells, petiole cells and cells associated with differentiating vascular bundles.

Its function is as follows. Involved in osmotic and salt stress tolerance. May play a role in the control of meristematic cell size during osmotic stress. May function as an adapter protein for BRL2 and may be required for signaling affecting leaf vascular tissue pattern formation. The sequence is that of Inactive TPR repeat-containing thioredoxin TTL3 from Arabidopsis thaliana (Mouse-ear cress).